The following is a 301-amino-acid chain: Sulfate adenylyltransferase subunit 2 (301 aa).

The interval 279–301 (RQGRLIDHDQDGSMEKKKQEGYF) is disordered.

Belongs to the PAPS reductase family. CysD subfamily. In terms of assembly, heterodimer composed of CysD, the smaller subunit, and CysN.

It catalyses the reaction sulfate + ATP + H(+) = adenosine 5'-phosphosulfate + diphosphate. It functions in the pathway sulfur metabolism; hydrogen sulfide biosynthesis; sulfite from sulfate: step 1/3. Its function is as follows. With CysN forms the ATP sulfurylase (ATPS) that catalyzes the adenylation of sulfate producing adenosine 5'-phosphosulfate (APS) and diphosphate, the first enzymatic step in sulfur assimilation pathway. APS synthesis involves the formation of a high-energy phosphoric-sulfuric acid anhydride bond driven by GTP hydrolysis by CysN coupled to ATP hydrolysis by CysD. This Geotalea uraniireducens (strain Rf4) (Geobacter uraniireducens) protein is Sulfate adenylyltransferase subunit 2.